Reading from the N-terminus, the 180-residue chain is Ribulose bisphosphate carboxylase small subunit, chloroplastic 2 (180 aa).

The transit peptide at 1–56 (MASSVISSAAVATRSNVTQASMVAPFTGLKSSATFPVTKKQNLDITSIASNGGRVS) directs the protein to the chloroplast.

The protein belongs to the RuBisCO small chain family. As to quaternary structure, heterohexadecamer of 8 large and 8 small subunits. (Microbial infection) Binds to tobamovirus movement protein; this interaction seems required for viral systemic movement.

The protein localises to the plastid. It is found in the chloroplast. Its subcellular location is the cell junction. It localises to the plasmodesma. Its function is as follows. RuBisCO catalyzes two reactions: the carboxylation of D-ribulose 1,5-bisphosphate, the primary event in carbon dioxide fixation, as well as the oxidative fragmentation of the pentose substrate. Both reactions occur simultaneously and in competition at the same active site. Although the small subunit is not catalytic it is essential for maximal activity. Involved in antiviral defenses. The sequence is that of Ribulose bisphosphate carboxylase small subunit, chloroplastic 2 from Solanum lycopersicum (Tomato).